The chain runs to 189 residues: Glutathione-dependent formaldehyde-activating enzyme (189 aa).

The 148-residue stretch at 20–167 folds into the CENP-V/GFA domain; that stretch reads FAGGTLVCKC…LKELGLEPYD (148 aa). Cys27, Cys29, Cys48, Cys50, Cys53, Cys95, and Cys98 together coordinate Zn(2+).

The protein belongs to the Gfa family. Zn(2+) is required as a cofactor.

The catalysed reaction is S-(hydroxymethyl)glutathione = glutathione + formaldehyde. It participates in one-carbon metabolism; formaldehyde degradation; formate from formaldehyde (glutathione route): step 1/3. In terms of biological role, catalyzes the condensation of formaldehyde and glutathione to S-hydroxymethylglutathione. This Rhodopseudomonas palustris (strain BisA53) protein is Glutathione-dependent formaldehyde-activating enzyme.